Here is a 2223-residue protein sequence, read N- to C-terminus: MAESASPPSSSAAAPAAEPGVTTEQPGPRSPPSSPPGLEEPLDGADPHVPHPDLAPIAFFCLRQTTSPRNWCIKMVCNPWFECVSMLVILLNCVTLGMYQPCDDMDCLSDRCKILQVFDDFIFIFFAMEMVLKMVALGIFGKKCYLGDTWNRLDFFIVMAGMVEYSLDLQNINLSAIRTVRVLRPLKAINRVPSMRILVNLLLDTLPMLGNVLLLCFFVFFIFGIIGVQLWAGLLRNRCFLEENFTIQGDVALPPYYQPEEDDEMPFICSLSGDNGIMGCHEIPPLKEQGRECCLSKDDVYDFGAGRQDLNASGLCVNWNRYYNVCRTGSANPHKGAINFDNIGYAWIVIFQVITLEGWVEIMYYVMDAHSFYNFIYFILLIIVGSFFMINLCLVVIATQFSETKQREHRLMLEQRQRYLSSSTVASYAEPGDCYEEIFQYVCHILRKAKRRALGLYQALQSRRQALGPEAPAPAKPGPHAKEPRHYHGKTKGQGDEGRHLGSRHCQTLHGPASPGNDHSGRELCPQHSPLDATPHTLVQPIPATLASDPASCPCCQHEDGRRPSGLGSTDSGQEGSGSGSSAGGEDEADGDGARSSEDGASSELGKEEEEEEQADGAVWLCGDVWRETRAKLRGIVDSKYFNRGIMMAILVNTVSMGIEHHEQPEELTNILEICNVVFTSMFALEMILKLAAFGLFDYLRNPYNIFDSIIVIISIWEIVGQADGGLSVLRTFRLLRVLKLVRFMPALRRQLVVLMKTMDNVATFCMLLMLFIFIFSILGMHIFGCKFSLRTDTGDTVPDRKNFDSLLWAIVTVFQILTQEDWNVVLYNGMASTSPWASLYFVALMTFGNYVLFNLLVAILVEGFQAEGDANRSYSDEDQSSSNIEEFDKLQEGLDSSGDPKLCPIPMTPNGHLDPSLPLGGHLGPAGAAGPAPRLSLQPDPMLVALGSRKSSVMSLGRMSYDQRSLSSSRSSYYGPWGRSAAWASRRSSWNSLKHKPPSAEHESLLSAERGGGARVCEVAADEGPPRAAPLHTPHAHHIHHGPHLAHRHRHHRRTLSLDNRDSVDLAELVPAVGAHPRAAWRAAGPAPGHEDCNGRMPSIAKDVFTKMGDRGDRGEDEEEIDYTLCFRVRKMIDVYKPDWCEVREDWSVYLFSPENRFRVLCQTIIAHKLFDYVVLAFIFLNCITIALERPQIEAGSTERIFLTVSNYIFTAIFVGEMTLKVVSLGLYFGEQAYLRSSWNVLDGFLVFVSIIDIVVSLASAGGAKILGVLRVLRLLRTLRPLRVISRAPGLKLVVETLISSLKPIGNIVLICCAFFIIFGILGVQLFKGKFYHCLGVDTRNITNRSDCMAANYRWVHHKYNFDNLGQALMSLFVLASKDGWVNIMYNGLDAVAVDQQPVTNHNPWMLLYFISFLLIVSFFVLNMFVGVVVENFHKCRQHQEAEEARRREEKRLRRLEKKRRKAQRLPYYATYCHTRLLIHSMCTSHYLDIFITFIICLNVVTMSLEHYNQPTSLETALKYCNYMFTTVFVLEAVLKLVAFGLRRFFKDRWNQLDLAIVLLSVMGITLEEIEINAALPINPTIIRIMRVLRIARVLKLLKMATGMRALLDTVVQALPQVGNLGLLFMLLFFIYAALGVELFGKLVCNDENPCEGMSRHATFENFGMAFLTLFQVSTGDNWNGIMKDTLRDCTHDERSCLSSLQFVSPLYFVSFVLTAQFVLINVVVAVLMKHLDDSNKEAQEDAEMDAELELEMAHGLGPGPRLPTGSPGAPGRGPGGAGGGGDTEGGLCRRCYSPAQENLWLDSVSLIIKDSLEGELTIIDNLSGSIFHHYSSPAGCKKCHHDKQEVQLAETEAFSLNSDRSSSILLGDDLSLEDPTACPPGRKDSKGELDPPEPMRVGDLGECFFPLSSTAVSPDPENFLCEMEEIPFNPVRSWLKHDSSQAPPSPFSPDASSPLLPMPAEFFHPAVSASQKGPEKGTGTGTLPKIALQGSWASLRSPRVNCTLLRQATGSDTSLDASPSSSAGSLQTTLEDSLTLSDSPRRALGPPAPAPGPRAGLSPAARRRLSLRGRGLFSLRGLRAHQRSHSSGGSTSPGCTHHDSMDPSDEEGRGGAGGGGAGSEHSETLSSLSLTSLFCPPPPPPAPGLTPARKFSSTSSLAAPGRPHAAALAHGLARSPSWAADRSKDPPGRAPLPMGLGPLAPPPQPLPGELEPGDAASKRKR.

Residues 1 to 19 (MAESASPPSSSAAAPAAEP) are compositionally biased toward low complexity. The segment at 1 to 46 (MAESASPPSSSAAAPAAEPGVTTEQPGPRSPPSSPPGLEEPLDGAD) is disordered. The Cytoplasmic segment spans residues 1–78 (MAESASPPSS…RNWCIKMVCN (78 aa)). The stretch at 66–401 (TSPRNWCIKM…LCLVVIATQF (336 aa)) is one I repeat. A helical transmembrane segment spans residues 79-99 (PWFECVSMLVILLNCVTLGMY). Topologically, residues 100 to 120 (QPCDDMDCLSDRCKILQVFDD) are extracellular. Residues 121–141 (FIFIFFAMEMVLKMVALGIFG) traverse the membrane as a helical segment. The Cytoplasmic portion of the chain corresponds to 142–148 (KKCYLGD). A helical membrane pass occupies residues 149 to 168 (TWNRLDFFIVMAGMVEYSLD). At 169–173 (LQNIN) the chain is on the extracellular side. An N-linked (GlcNAc...) asparagine glycan is attached at asparagine 173. A helical membrane pass occupies residues 174 to 191 (LSAIRTVRVLRPLKAINR). The Cytoplasmic portion of the chain corresponds to 192 to 211 (VPSMRILVNLLLDTLPMLGN). Residues 212–232 (VLLLCFFVFFIFGIIGVQLWA) form a helical membrane-spanning segment. Residues 233–377 (GLLRNRCFLE…DAHSFYNFIY (145 aa)) are Extracellular-facing. Asparagine 244 and asparagine 311 each carry an N-linked (GlcNAc...) asparagine glycan. A helical transmembrane segment spans residues 378–398 (FILLIIVGSFFMINLCLVVIA). Residues 399 to 640 (TQFSETKQRE…AKLRGIVDSK (242 aa)) are Cytoplasmic-facing. Disordered regions lie at residues 467–536 (LGPE…ATPH) and 555–616 (CCQH…EQAD). The II repeat unit spans residues 626 to 865 (WRETRAKLRG…LLVAILVEGF (240 aa)). The helical transmembrane segment at 641-661 (YFNRGIMMAILVNTVSMGIEH) threads the bilayer. Over 662-676 (HEQPEELTNILEICN) the chain is Extracellular. The chain crosses the membrane as a helical span at residues 677-697 (VVFTSMFALEMILKLAAFGLF). At 698 to 702 (DYLRN) the chain is on the cytoplasmic side. A helical membrane pass occupies residues 703–721 (PYNIFDSIIVIISIWEIVG). The Extracellular portion of the chain corresponds to 722–729 (QADGGLSV). Residues 730 to 753 (LRTFRLLRVLKLVRFMPALRRQLV) traverse the membrane as a helical segment. Residues 754 to 764 (VLMKTMDNVAT) are Cytoplasmic-facing. A helical transmembrane segment spans residues 765 to 785 (FCMLLMLFIFIFSILGMHIFG). The Extracellular portion of the chain corresponds to 786 to 841 (CKFSLRTDTGDTVPDRKNFDSLLWAIVTVFQILTQEDWNVVLYNGMASTSPWASLY). A helical membrane pass occupies residues 842–862 (FVALMTFGNYVLFNLLVAILV). The Cytoplasmic segment spans residues 863 to 1166 (EGFQAEGDAN…NRFRVLCQTI (304 aa)). The tract at residues 899-936 (GDPKLCPIPMTPNGHLDPSLPLGGHLGPAGAAGPAPRL) is disordered. Over residues 912 to 936 (GHLDPSLPLGGHLGPAGAAGPAPRL) the composition is skewed to low complexity. At serine 1058 the chain carries Phosphoserine. The stretch at 1157-1434 (NRFRVLCQTI…MFVGVVVENF (278 aa)) is one III repeat. A helical membrane pass occupies residues 1167-1187 (IAHKLFDYVVLAFIFLNCITI). The Extracellular portion of the chain corresponds to 1188 to 1209 (ALERPQIEAGSTERIFLTVSNY). The helical transmembrane segment at 1210 to 1230 (IFTAIFVGEMTLKVVSLGLYF) threads the bilayer. At 1231 to 1244 (GEQAYLRSSWNVLD) the chain is on the cytoplasmic side. A helical membrane pass occupies residues 1245–1265 (GFLVFVSIIDIVVSLASAGGA). At 1266 to 1272 (KILGVLR) the chain is on the extracellular side. Residues 1273 to 1294 (VLRLLRTLRPLRVISRAPGLKL) form a helical membrane-spanning segment. At 1295-1304 (VVETLISSLK) the chain is on the cytoplasmic side. The helical transmembrane segment at 1305 to 1325 (PIGNIVLICCAFFIIFGILGV) threads the bilayer. At 1326 to 1410 (QLFKGKFYHC…TNHNPWMLLY (85 aa)) the chain is on the extracellular side. N-linked (GlcNAc...) asparagine glycosylation is found at asparagine 1342 and asparagine 1345. A helical transmembrane segment spans residues 1411 to 1431 (FISFLLIVSFFVLNMFVGVVV). Topologically, residues 1432–1485 (ENFHKCRQHQEAEEARRREEKRLRRLEKKRRKAQRLPYYATYCHTRLLIHSMCT) are cytoplasmic. Residues 1472 to 1733 (TYCHTRLLIH…VVVAVLMKHL (262 aa)) form an IV repeat. A helical transmembrane segment spans residues 1486 to 1506 (SHYLDIFITFIICLNVVTMSL). Over 1507–1522 (EHYNQPTSLETALKYC) the chain is Extracellular. Residues 1523 to 1543 (NYMFTTVFVLEAVLKLVAFGL) form a helical membrane-spanning segment. Over 1544 to 1556 (RRFFKDRWNQLDL) the chain is Cytoplasmic. Residues 1557 to 1577 (AIVLLSVMGITLEEIEINAAL) traverse the membrane as a helical segment. Residues 1578 to 1583 (PINPTI) are Extracellular-facing. A helical membrane pass occupies residues 1584-1607 (IRIMRVLRIARVLKLLKMATGMRA). Residues 1608-1621 (LLDTVVQALPQVGN) are Cytoplasmic-facing. The chain crosses the membrane as a helical span at residues 1622-1642 (LGLLFMLLFFIYAALGVELFG). The Extracellular portion of the chain corresponds to 1643–1709 (KLVCNDENPC…SSLQFVSPLY (67 aa)). The helical transmembrane segment at 1710–1730 (FVSFVLTAQFVLINVVVAVLM) threads the bilayer. Residues 1731–2223 (KHLDDSNKEA…PGDAASKRKR (493 aa)) lie on the Cytoplasmic side of the membrane. Disordered stretches follow at residues 1758-1784 (LGPG…GGGD), 1868-1897 (LGDD…PEPM), 1937-1960 (LKHD…LLPM), 2013-2062 (SDTS…LSPA), and 2076-2223 (SLRG…KRKR). A compositionally biased stretch (gly residues) spans 1770 to 1784 (GAPGRGPGGAGGGGD). A compositionally biased stretch (low complexity) spans 2013–2028 (SDTSLDASPSSSAGSL). Composition is skewed to polar residues over residues 2029-2040 (QTTLEDSLTLSD) and 2087-2096 (HSSGGSTSPG). A compositionally biased stretch (basic and acidic residues) spans 2098–2111 (THHDSMDPSDEEGR). Positions 2126–2136 (TLSSLSLTSLF) are enriched in low complexity. Positions 2137–2146 (CPPPPPPAPG) are enriched in pro residues. A compositionally biased stretch (low complexity) spans 2160–2176 (AAPGRPHAAALAHGLAR).

The protein belongs to the calcium channel alpha-1 subunit (TC 1.A.1.11) family. CACNA1I subfamily. Interacts with CATSPER1 and CATSPER2, leading to suppress T-type calcium channel activity. In terms of processing, in response to raising of intracellular calcium, the T-type channels are activated by CaM-kinase II. As to expression, brain specific.

Its subcellular location is the membrane. The catalysed reaction is Ca(2+)(in) = Ca(2+)(out). In terms of biological role, voltage-sensitive calcium channels (VSCC) mediate the entry of calcium ions into excitable cells and are also involved in a variety of calcium-dependent processes, including muscle contraction, hormone or neurotransmitter release, gene expression, cell motility, cell division and cell death. This channel gives rise to T-type calcium currents. T-type calcium channels belong to the 'low-voltage activated (LVA)' group and are strongly blocked by nickel and mibefradil. A particularity of this type of channels is an opening at quite negative potentials, and a voltage-dependent inactivation. T-type channels serve pacemaking functions in both central neurons and cardiac nodal cells and support calcium signaling in secretory cells and vascular smooth muscle. They may also be involved in the modulation of firing patterns of neurons which is important for information processing as well as in cell growth processes. Gates in voltage ranges similar to, but higher than alpha 1G or alpha 1H. Functionally, voltage-sensitive calcium channels (VSCC) mediate the entry of calcium ions into excitable cells and are also involved in a variety of calcium-dependent processes, including muscle contraction, hormone or neurotransmitter release, gene expression, cell motility, cell division and cell death. This channel gives rise to T-type calcium currents. The chain is Voltage-dependent T-type calcium channel subunit alpha-1I (CACNA1I) from Homo sapiens (Human).